We begin with the raw amino-acid sequence, 158 residues long: Crossover junction endodeoxyribonuclease RuvC (158 aa).

Residues Asp-7, Glu-67, and Asp-140 contribute to the active site. Mg(2+)-binding residues include Asp-7, Glu-67, and Asp-140.

Belongs to the RuvC family. In terms of assembly, homodimer which binds Holliday junction (HJ) DNA. The HJ becomes 2-fold symmetrical on binding to RuvC with unstacked arms; it has a different conformation from HJ DNA in complex with RuvA. In the full resolvosome a probable DNA-RuvA(4)-RuvB(12)-RuvC(2) complex forms which resolves the HJ. The cofactor is Mg(2+).

The protein resides in the cytoplasm. It catalyses the reaction Endonucleolytic cleavage at a junction such as a reciprocal single-stranded crossover between two homologous DNA duplexes (Holliday junction).. In terms of biological role, the RuvA-RuvB-RuvC complex processes Holliday junction (HJ) DNA during genetic recombination and DNA repair. Endonuclease that resolves HJ intermediates. Cleaves cruciform DNA by making single-stranded nicks across the HJ at symmetrical positions within the homologous arms, yielding a 5'-phosphate and a 3'-hydroxyl group; requires a central core of homology in the junction. The consensus cleavage sequence is 5'-(A/T)TT(C/G)-3'. Cleavage occurs on the 3'-side of the TT dinucleotide at the point of strand exchange. HJ branch migration catalyzed by RuvA-RuvB allows RuvC to scan DNA until it finds its consensus sequence, where it cleaves and resolves the cruciform DNA. The sequence is that of Crossover junction endodeoxyribonuclease RuvC from Dictyoglomus turgidum (strain DSM 6724 / Z-1310).